The chain runs to 430 residues: Tol-Pal system protein TolB (430 aa).

Positions 1-26 are cleaved as a signal peptide; it reads MSLMTKLGLRTLVASCLIAVGGAANA.

It belongs to the TolB family. In terms of assembly, the Tol-Pal system is composed of five core proteins: the inner membrane proteins TolA, TolQ and TolR, the periplasmic protein TolB and the outer membrane protein Pal. They form a network linking the inner and outer membranes and the peptidoglycan layer.

The protein resides in the periplasm. In terms of biological role, part of the Tol-Pal system, which plays a role in outer membrane invagination during cell division and is important for maintaining outer membrane integrity. This is Tol-Pal system protein TolB from Paraburkholderia xenovorans (strain LB400).